Reading from the N-terminus, the 559-residue chain is Amino-acid acetyltransferase, mitochondrial (559 aa).

The disordered stretch occupies residues Arg162–Pro188. Residues Leu362–Asp538 form the N-acetyltransferase domain.

Belongs to the acetyltransferase family.

It is found in the mitochondrion. The enzyme catalyses L-glutamate + acetyl-CoA = N-acetyl-L-glutamate + CoA + H(+). It functions in the pathway amino-acid biosynthesis; L-arginine biosynthesis; N(2)-acetyl-L-ornithine from L-glutamate: step 1/4. N-acetylglutamate synthase involved in arginine biosynthesis. In Laccaria bicolor (strain S238N-H82 / ATCC MYA-4686) (Bicoloured deceiver), this protein is Amino-acid acetyltransferase, mitochondrial (ARG2).